Here is a 257-residue protein sequence, read N- to C-terminus: Major prion protein (257 aa).

Positions 1–24 (MVKSHIGGWILLLFVATWSDVGLC) are cleaved as a signal peptide. Residues 25 to 234 (KKRPKPGGWN…ESEAYYQRGA (210 aa)) are interaction with GRB2, ERI3 and SYN1. Residues 28–110 (PKPGGWNTGG…GQWGKPNKPK (83 aa)) are disordered. Gly residues-rich tracts occupy residues 33–48 (WNTGGGSRYPGQGSPG) and 55–101 (QGGG…GSHG). A run of 5 repeats spans residues 54 to 62 (PQGGGGWGQ), 63 to 70 (PHGGGWGQ), 71 to 78 (PHGGGWGQ), 79 to 86 (PHGGGWGQ), and 87 to 95 (PHGGGGWGQ). Residues 54-95 (PQGGGGWGQPHGGGWGQPHGGGWGQPHGGGWGQPHGGGGWGQ) are 5 X 8 AA tandem repeats of P-H-G-G-G-W-G-Q. His-64, Gly-65, Gly-66, His-72, Gly-73, Gly-74, His-80, Gly-81, Gly-82, His-88, Gly-90, and Gly-91 together coordinate Cu(2+). Cysteines 183 and 218 form a disulfide. N-linked (GlcNAc...) asparagine glycosylation is found at Asn-185 and Asn-201. Residue Ala-234 is the site of GPI-anchor amidated alanine attachment. Positions 235-257 (SAILFSPPPVILLISLLILLIVG) are cleaved as a propeptide — removed in mature form.

Belongs to the prion family. As to quaternary structure, monomer and homodimer. Has a tendency to aggregate into amyloid fibrils containing a cross-beta spine, formed by a steric zipper of superposed beta-strands. Soluble oligomers may represent an intermediate stage on the path to fibril formation. Copper binding may promote oligomerization. Interacts with GRB2, APP, ERI3/PRNPIP and SYN1. Mislocalized cytosolically exposed PrP interacts with MGRN1; this interaction alters MGRN1 subcellular location and causes lysosomal enlargement. Interacts with KIAA1191.

The protein resides in the cell membrane. Its subcellular location is the golgi apparatus. Functionally, its primary physiological function is unclear. Has cytoprotective activity against internal or environmental stresses. May play a role in neuronal development and synaptic plasticity. May be required for neuronal myelin sheath maintenance. May play a role in iron uptake and iron homeostasis. Soluble oligomers are toxic to cultured neuroblastoma cells and induce apoptosis (in vitro). Association with GPC1 (via its heparan sulfate chains) targets PRNP to lipid rafts. Also provides Cu(2+) or Zn(2+) for the ascorbate-mediated GPC1 deaminase degradation of its heparan sulfate side chains. This chain is Major prion protein, found in Vulpes lagopus (Arctic fox).